A 319-amino-acid polypeptide reads, in one-letter code: Dehydrogenase/reductase SDR family member 9 (319 aa).

Positions 1–20 (MLFWLLALLFLCAFLWNYKG) are cleaved as a signal peptide. NAD(+) contacts are provided by residues 34–58 (ITGC…RVIA) and aspartate 83. A substrate-binding site is contributed by serine 164. Tyrosine 176 serves as the catalytic Proton acceptor. Residue lysine 180 coordinates NAD(+).

It belongs to the short-chain dehydrogenases/reductases (SDR) family. Homotetramer.

Its subcellular location is the microsome membrane. It localises to the endoplasmic reticulum membrane. The catalysed reaction is 3beta-hydroxy-5alpha-pregnane-20-one + NAD(+) = 5alpha-pregnane-3,20-dione + NADH + H(+). It catalyses the reaction 17beta-hydroxy-5alpha-androstan-3-one + NAD(+) = 5alpha-androstan-3,17-dione + NADH + H(+). The enzyme catalyses androsterone + NAD(+) = 5alpha-androstan-3,17-dione + NADH + H(+). It carries out the reaction 5alpha-androstane-3alpha,17beta-diol + NAD(+) = 17beta-hydroxy-5alpha-androstan-3-one + NADH + H(+). The catalysed reaction is all-trans-retinol + NAD(+) = all-trans-retinal + NADH + H(+). It catalyses the reaction 3alpha-hydroxy-5alpha-pregnan-20-one + NAD(+) = 5alpha-pregnane-3,20-dione + NADH + H(+). In terms of biological role, 3-alpha-hydroxysteroid dehydrogenase that converts 3-alpha-tetrahydroprogesterone (allopregnanolone) to dihydroxyprogesterone and 3-alpha-androstanediol to dihydroxyprogesterone. Also plays a role in the biosynthesis of retinoic acid. Can utilize both NADH and NADPH. This is Dehydrogenase/reductase SDR family member 9 (Dhrs9) from Mus musculus (Mouse).